The sequence spans 796 residues: Protein translocase subunit SecA 2 (796 aa).

ATP is bound by residues Gln-84, 102 to 106, and Asp-496; that span reads GEGKT.

This sequence belongs to the SecA family. Monomer and homodimer. Part of the essential Sec protein translocation apparatus which comprises SecA, SecYEG and auxiliary proteins SecDF. Other proteins may also be involved.

The protein resides in the cell membrane. The protein localises to the cytoplasm. The enzyme catalyses ATP + H2O + cellular proteinSide 1 = ADP + phosphate + cellular proteinSide 2.. Functionally, part of the Sec protein translocase complex. Interacts with the SecYEG preprotein conducting channel. Has a central role in coupling the hydrolysis of ATP to the transfer of proteins into and across the cell membrane, serving as an ATP-driven molecular motor driving the stepwise translocation of polypeptide chains across the membrane. The sequence is that of Protein translocase subunit SecA 2 from Staphylococcus aureus (strain MSSA476).